A 90-amino-acid polypeptide reads, in one-letter code: Small ribosomal subunit protein uS15 (90 aa).

Belongs to the universal ribosomal protein uS15 family. In terms of assembly, part of the 30S ribosomal subunit. Forms a bridge to the 50S subunit in the 70S ribosome, contacting the 23S rRNA.

One of the primary rRNA binding proteins, it binds directly to 16S rRNA where it helps nucleate assembly of the platform of the 30S subunit by binding and bridging several RNA helices of the 16S rRNA. Its function is as follows. Forms an intersubunit bridge (bridge B4) with the 23S rRNA of the 50S subunit in the ribosome. This Helicobacter acinonychis (strain Sheeba) protein is Small ribosomal subunit protein uS15.